A 251-amino-acid polypeptide reads, in one-letter code: Imidazole glycerol phosphate synthase subunit HisF (251 aa).

Active-site residues include Asp-11 and Asp-130.

Belongs to the HisA/HisF family. Heterodimer of HisH and HisF.

Its subcellular location is the cytoplasm. The catalysed reaction is 5-[(5-phospho-1-deoxy-D-ribulos-1-ylimino)methylamino]-1-(5-phospho-beta-D-ribosyl)imidazole-4-carboxamide + L-glutamine = D-erythro-1-(imidazol-4-yl)glycerol 3-phosphate + 5-amino-1-(5-phospho-beta-D-ribosyl)imidazole-4-carboxamide + L-glutamate + H(+). Its pathway is amino-acid biosynthesis; L-histidine biosynthesis; L-histidine from 5-phospho-alpha-D-ribose 1-diphosphate: step 5/9. In terms of biological role, IGPS catalyzes the conversion of PRFAR and glutamine to IGP, AICAR and glutamate. The HisF subunit catalyzes the cyclization activity that produces IGP and AICAR from PRFAR using the ammonia provided by the HisH subunit. The sequence is that of Imidazole glycerol phosphate synthase subunit HisF from Chlorobaculum parvum (strain DSM 263 / NCIMB 8327) (Chlorobium vibrioforme subsp. thiosulfatophilum).